We begin with the raw amino-acid sequence, 320 residues long: MQNRNTFSWVKDQMSRFISVSIMIYVITRTSISNAYPIFAQQGYENPREATGRIVCANCHLANKPVDIEVPQAVLPDTVFEAVVRIPYDMQLKQVLANGKKGGLNVGAVLILPEGFELAPPDRISPEMKEKIGNLSFQSYRPNKKNILIMGPVPGKKYSQIVFPILSPDPATKKDVHFLKYPIYVGGNRGRGQIYPDGSKSNNTVYNATATGIVSKIVRKEKGGYEITIADTADGHQVVDIIPPGPELLVSEGESIKIDQPLTSNPNVGGFGQGDAEIVLQDPLRVQGLLFFFASVILAQIFLVLKKKQFEKVQLSEMNF.

A signal peptide spans 1–35 (MQNRNTFSWVKDQMSRFISVSIMIYVITRTSISNA). Heme contacts are provided by Tyr-36, Cys-56, Cys-59, and His-60. Residues 286-306 (VQGLLFFFASVILAQIFLVLK) traverse the membrane as a helical segment.

This sequence belongs to the cytochrome f family. As to quaternary structure, the 4 large subunits of the cytochrome b6-f complex are cytochrome b6, subunit IV (17 kDa polypeptide, petD), cytochrome f and the Rieske protein, while the 4 small subunits are PetG, PetL, PetM and PetN. The complex functions as a dimer. Heme is required as a cofactor.

The protein resides in the plastid. It localises to the chloroplast thylakoid membrane. Its function is as follows. Component of the cytochrome b6-f complex, which mediates electron transfer between photosystem II (PSII) and photosystem I (PSI), cyclic electron flow around PSI, and state transitions. This Ceratophyllum demersum (Rigid hornwort) protein is Cytochrome f.